We begin with the raw amino-acid sequence, 158 residues long: Cytochrome c-type biogenesis protein CcmE (158 aa).

Polar residues predominate over residues 1–11; sequence MTRPDSGSSPA. The disordered stretch occupies residues 1–20; sequence MTRPDSGSSPAPLSEARRRK. At 1–23 the chain is on the cytoplasmic side; sequence MTRPDSGSSPAPLSEARRRKRNP. A helical; Signal-anchor for type II membrane protein transmembrane segment spans residues 24 to 44; sequence LPTVLGITALLGLAGFIAFGN. Residues 45–158 lie on the Extracellular side of the membrane; sequence LNKSLEYFVT…ELRDLLEQSE (114 aa). Positions 137 and 141 each coordinate heme.

This sequence belongs to the CcmE/CycJ family.

The protein resides in the cell membrane. Functionally, heme chaperone required for the biogenesis of c-type cytochromes. Transiently binds heme delivered by CcmC and transfers the heme to apo-cytochromes in a process facilitated by CcmF and CcmH. This chain is Cytochrome c-type biogenesis protein CcmE, found in Deinococcus deserti (strain DSM 17065 / CIP 109153 / LMG 22923 / VCD115).